The sequence spans 360 residues: tRNA pseudouridine synthase D (360 aa).

Catalysis depends on aspartate 76, which acts as the Nucleophile. The TRUD domain maps to 151 to 332; sequence GMPNFFGYQR…HGIYKEKNAW (182 aa).

Belongs to the pseudouridine synthase TruD family.

The catalysed reaction is uridine(13) in tRNA = pseudouridine(13) in tRNA. Its function is as follows. Responsible for synthesis of pseudouridine from uracil-13 in transfer RNAs. The chain is tRNA pseudouridine synthase D from Nitratiruptor sp. (strain SB155-2).